The following is a 604-amino-acid chain: Terpenoid synthase 30 (604 aa).

Mg(2+)-binding residues include Asn356, Asp360, Asn500, Thr504, and Glu508. The short motif at 356–360 (NDVCD) is the DDXXD motif; degenerate element.

Belongs to the terpene synthase family. Tpsa subfamily. It depends on Mg(2+) as a cofactor. Requires Mn(2+) as cofactor.

It localises to the cytoplasm. It functions in the pathway secondary metabolite biosynthesis; terpenoid biosynthesis. Functionally, involved in terpene biosynthesis in roots. Possesses sesquiterpene (C15) synthase activity and diterpene (C20) synthase activity in vitro. The chain is Terpenoid synthase 30 from Arabidopsis thaliana (Mouse-ear cress).